A 579-amino-acid polypeptide reads, in one-letter code: Aspartate--tRNA(Asp/Asn) ligase (579 aa).

E169 lines the L-aspartate pocket. Residues 193-196 (QLFK) are aspartate. R215 provides a ligand contact to L-aspartate. ATP contacts are provided by residues 215–217 (RDE) and Q224. H437 lines the L-aspartate pocket. E471 contacts ATP. R478 is a binding site for L-aspartate. 523–526 (GWDR) contacts ATP. Residues 551–579 (DPLTGAPTPITAEQRREAGVDAVPEQATS) are disordered.

Belongs to the class-II aminoacyl-tRNA synthetase family. Type 1 subfamily. In terms of assembly, homodimer.

It localises to the cytoplasm. It carries out the reaction tRNA(Asx) + L-aspartate + ATP = L-aspartyl-tRNA(Asx) + AMP + diphosphate. Its function is as follows. Aspartyl-tRNA synthetase with relaxed tRNA specificity since it is able to aspartylate not only its cognate tRNA(Asp) but also tRNA(Asn). Reaction proceeds in two steps: L-aspartate is first activated by ATP to form Asp-AMP and then transferred to the acceptor end of tRNA(Asp/Asn). This is Aspartate--tRNA(Asp/Asn) ligase from Thermobifida fusca (strain YX).